A 307-amino-acid chain; its full sequence is Ribonuclease Z (307 aa).

Positions 63, 65, 67, 68, 141, 212, and 270 each coordinate Zn(2+). Residue Asp-67 is the Proton acceptor of the active site.

The protein belongs to the RNase Z family. Homodimer. Zn(2+) is required as a cofactor.

It catalyses the reaction Endonucleolytic cleavage of RNA, removing extra 3' nucleotides from tRNA precursor, generating 3' termini of tRNAs. A 3'-hydroxy group is left at the tRNA terminus and a 5'-phosphoryl group is left at the trailer molecule.. In terms of biological role, zinc phosphodiesterase, which displays some tRNA 3'-processing endonuclease activity. Probably involved in tRNA maturation, by removing a 3'-trailer from precursor tRNA. The protein is Ribonuclease Z of Bacillus thuringiensis subsp. konkukian (strain 97-27).